Here is a 968-residue protein sequence, read N- to C-terminus: Phosphoenolpyruvate carboxylase 3 (968 aa).

Serine 11 bears the Phosphoserine mark. Catalysis depends on residues histidine 173 and lysine 603. Phosphoserine is present on serine 705.

This sequence belongs to the PEPCase type 1 family. Homotetramer. Requires Mg(2+) as cofactor. In terms of tissue distribution, expressed in roots and siliques, and to a lower extent in stems, leaves and flowers.

The protein localises to the cytoplasm. It catalyses the reaction oxaloacetate + phosphate = phosphoenolpyruvate + hydrogencarbonate. Its activity is regulated as follows. By light-reversible phosphorylation. Functionally, through the carboxylation of phosphoenolpyruvate (PEP) it forms oxaloacetate, a four-carbon dicarboxylic acid source for the tricarboxylic acid cycle. In Arabidopsis thaliana (Mouse-ear cress), this protein is Phosphoenolpyruvate carboxylase 3 (PPC3).